The primary structure comprises 469 residues: Protein YfjI (469 aa).

This Escherichia coli (strain K12) protein is Protein YfjI (yfjI).